Consider the following 595-residue polypeptide: Alginate biosynthesis sensor protein KinB (595 aa).

Over 1–12 the chain is Cytoplasmic; it reads MSMPLPMKLRTR. A helical transmembrane segment spans residues 13–33; that stretch reads LFLSISALITVSLFGLLLGLF. The Periplasmic segment spans residues 34–167; that stretch reads SVMQLGRAQE…SDAETSARHR (134 aa). The helical transmembrane segment at 168-188 threads the bilayer; the sequence is AYLVAGLLGLVGVAILLIGFV. Over 189–595 the chain is Cytoplasmic; that stretch reads TAHSIARRFG…GARFYMLLPV (407 aa). Positions 195-247 constitute an HAMP domain; the sequence is RRFGAPIETLARAADRIGEGDFDVTLPMTNVAEVGQLTRRFGLMAEALRQYRK. The region spanning 258 to 323 is the PAS domain; sequence RRLQAVLDSI…AVEKALLGEV (66 aa). Positions 327-369 constitute a PAC domain; the sequence is AMPDLVVDVAGESRLLAWSLYPVTHPGGHSVGAVLVVRDVTEQ. The Histidine kinase domain maps to 382-595; it reads RASHELRTPV…GARFYMLLPV (214 aa). Residue His385 is modified to Phosphohistidine; by autocatalysis.

Post-translationally, autophosphorylated.

The protein localises to the cell inner membrane. It catalyses the reaction ATP + protein L-histidine = ADP + protein N-phospho-L-histidine.. Functionally, member of the two-component regulatory system AlgB/KinB involved in regulation of alginate biosynthesis genes. KinB functions as a membrane-associated protein kinase that phosphorylates AlgB, probably in response to environmental signals. The chain is Alginate biosynthesis sensor protein KinB (kinB) from Pseudomonas aeruginosa.